A 269-amino-acid chain; its full sequence is Phosphatidylglycerol--prolipoprotein diacylglyceryl transferase (269 aa).

4 helical membrane passes run 14 to 34, 49 to 69, 89 to 109, and 118 to 138; these read IVQI…AGII, VAPE…IPMA, VFAI…GLLA, and GYSL…GQAI. Residue R140 coordinates a 1,2-diacyl-sn-glycero-3-phospho-(1'-sn-glycerol). 3 helical membrane passes run 180-200, 208-228, and 240-260; these read TFLY…FVFF, GSIA…IEGL, and TAQL…WWLN.

Belongs to the Lgt family.

It localises to the cell inner membrane. It carries out the reaction L-cysteinyl-[prolipoprotein] + a 1,2-diacyl-sn-glycero-3-phospho-(1'-sn-glycerol) = an S-1,2-diacyl-sn-glyceryl-L-cysteinyl-[prolipoprotein] + sn-glycerol 1-phosphate + H(+). It functions in the pathway protein modification; lipoprotein biosynthesis (diacylglyceryl transfer). Functionally, catalyzes the transfer of the diacylglyceryl group from phosphatidylglycerol to the sulfhydryl group of the N-terminal cysteine of a prolipoprotein, the first step in the formation of mature lipoproteins. This chain is Phosphatidylglycerol--prolipoprotein diacylglyceryl transferase, found in Gloeobacter violaceus (strain ATCC 29082 / PCC 7421).